The sequence spans 156 residues: U4/U6.U5 small nuclear ribonucleoprotein 27 kDa protein (156 aa).

The tract at residues 1–98 (MGRSRSRSPE…IAAEDLEGKT (98 aa)) is disordered. The segment covering 13–59 (RERRRSRSASRERERRRRERSRSRERRRSRSRSPHRRRSRSPRRHRS) has biased composition (basic residues). Basic and acidic residues predominate over residues 66–98 (RLKDRRDDDKKDSKESKGAKERQIAAEDLEGKT).

Belongs to the SNUT3 family. Part of a tri-snRNP complex.

The protein resides in the nucleus. Functionally, may play a role in mRNA splicing. In Xenopus tropicalis (Western clawed frog), this protein is U4/U6.U5 small nuclear ribonucleoprotein 27 kDa protein (snrnp27).